The chain runs to 313 residues: Formimidoylglutamase (313 aa).

Mn(2+) is bound by residues histidine 130, aspartate 155, histidine 157, aspartate 159, aspartate 241, and aspartate 243.

It belongs to the arginase family. Mn(2+) serves as cofactor.

It catalyses the reaction N-formimidoyl-L-glutamate + H2O = formamide + L-glutamate. It participates in amino-acid degradation; L-histidine degradation into L-glutamate; L-glutamate from N-formimidoyl-L-glutamate (hydrolase route): step 1/1. In terms of biological role, catalyzes the conversion of N-formimidoyl-L-glutamate to L-glutamate and formamide. The sequence is that of Formimidoylglutamase from Salmonella agona (strain SL483).